The primary structure comprises 151 residues: Small ribosomal subunit protein uS15 (151 aa).

Belongs to the universal ribosomal protein uS15 family.

The protein is Small ribosomal subunit protein uS15 (RPS13) of Pisum sativum (Garden pea).